The primary structure comprises 124 residues: U33-theraphotoxin-Cg1c (124 aa).

Positions 1 to 17 (MKFAVAIAFTLLVCVFA) are cleaved as a signal peptide. 5 disulfides stabilise this stretch: Cys-26/Cys-37, Cys-31/Cys-51, Cys-36/Cys-75, Cys-61/Cys-83, and Cys-77/Cys-94. Positions 93–108 (RCQEESGKSDKSKESQ) are enriched in basic and acidic residues. The disordered stretch occupies residues 93–124 (RCQEESGKSDKSKESQGSDESEESEESKESSG). The span at 109–118 (GSDESEESEE) shows a compositional bias: acidic residues.

The protein belongs to the neurotoxin 32 family. In terms of tissue distribution, expressed by the venom gland.

The protein localises to the secreted. The polypeptide is U33-theraphotoxin-Cg1c (Chilobrachys guangxiensis (Chinese earth tiger tarantula)).